Reading from the N-terminus, the 237-residue chain is Riboflavin kinase (237 aa).

Positions 1 to 101 (MRLKIKAIWV…SRIFSSEPDV (101 aa)) are unknown. The interval 102-237 (LELEGNVLKG…VKKQGMEGQK (136 aa)) is riboflavin kinase. 111 to 116 (GLGEGQ) is a binding site for CDP. Positions 140 and 142 each coordinate Mg(2+). Residues threonine 197 and glutamate 205 each coordinate FMN. 210-213 (VKLR) lines the CDP pocket.

It belongs to the archaeal riboflavin kinase family. Mg(2+) is required as a cofactor.

The catalysed reaction is riboflavin + CTP = CDP + FMN + H(+). It participates in cofactor biosynthesis; FMN biosynthesis; FMN from riboflavin (CTP route): step 1/1. Catalyzes the CTP-dependent phosphorylation of riboflavin (vitamin B2) to form flavin mononucleotide (FMN). This is Riboflavin kinase (ribK) from Methanosarcina acetivorans (strain ATCC 35395 / DSM 2834 / JCM 12185 / C2A).